The following is a 603-amino-acid chain: DNA mismatch repair protein MutL (603 aa).

Residues 337-347 are compositionally biased toward basic and acidic residues; it reads ISKKQKEDQKS. The tract at residues 337-383 is disordered; sequence ISKKQKEDQKSEQIQMSFEENKPVKETPTLFSKPTIPEYVPSDEDAP.

This sequence belongs to the DNA mismatch repair MutL/HexB family.

Functionally, this protein is involved in the repair of mismatches in DNA. It is required for dam-dependent methyl-directed DNA mismatch repair. May act as a 'molecular matchmaker', a protein that promotes the formation of a stable complex between two or more DNA-binding proteins in an ATP-dependent manner without itself being part of a final effector complex. In Listeria monocytogenes serotype 4b (strain F2365), this protein is DNA mismatch repair protein MutL.